Here is a 137-residue protein sequence, read N- to C-terminus: Large ribosomal subunit protein uL16c (137 aa).

This sequence belongs to the universal ribosomal protein uL16 family. In terms of assembly, part of the 50S ribosomal subunit.

It is found in the plastid. This is Large ribosomal subunit protein uL16c (rpl16) from Helicosporidium sp. subsp. Simulium jonesii (Green alga).